The following is a 227-amino-acid chain: Cytochrome c oxidase subunit 2 (227 aa).

Topologically, residues 1 to 14 are mitochondrial intermembrane; it reads MAYPFQLGLQDATS. The chain crosses the membrane as a helical span at residues 15 to 45; sequence PIMEELLHFHDHTLMIVFLISSLVLYIISLM. Residues 46 to 59 lie on the Mitochondrial matrix side of the membrane; the sequence is LTTKLTHTSTMDAQ. A helical transmembrane segment spans residues 60–87; sequence EVETVWTILPAIILISIALPSLRILYMM. At 88 to 227 the chain is on the mitochondrial intermembrane side; it reads DEINNPSLTV…YFEAWSTLMM (140 aa). Cu cation is bound by residues His-161, Cys-196, Glu-198, Cys-200, His-204, and Met-207. Position 198 (Glu-198) interacts with Mg(2+). Residue Tyr-218 is modified to Phosphotyrosine.

The protein belongs to the cytochrome c oxidase subunit 2 family. As to quaternary structure, component of the cytochrome c oxidase (complex IV, CIV), a multisubunit enzyme composed of 14 subunits. The complex is composed of a catalytic core of 3 subunits MT-CO1, MT-CO2 and MT-CO3, encoded in the mitochondrial DNA, and 11 supernumerary subunits COX4I, COX5A, COX5B, COX6A, COX6B, COX6C, COX7A, COX7B, COX7C, COX8 and NDUFA4, which are encoded in the nuclear genome. The complex exists as a monomer or a dimer and forms supercomplexes (SCs) in the inner mitochondrial membrane with NADH-ubiquinone oxidoreductase (complex I, CI) and ubiquinol-cytochrome c oxidoreductase (cytochrome b-c1 complex, complex III, CIII), resulting in different assemblies (supercomplex SCI(1)III(2)IV(1) and megacomplex MCI(2)III(2)IV(2)). Found in a complex with TMEM177, COA6, COX18, COX20, SCO1 and SCO2. Interacts with TMEM177 in a COX20-dependent manner. Interacts with COX20. Interacts with COX16. Cu cation serves as cofactor.

It localises to the mitochondrion inner membrane. The enzyme catalyses 4 Fe(II)-[cytochrome c] + O2 + 8 H(+)(in) = 4 Fe(III)-[cytochrome c] + 2 H2O + 4 H(+)(out). Its function is as follows. Component of the cytochrome c oxidase, the last enzyme in the mitochondrial electron transport chain which drives oxidative phosphorylation. The respiratory chain contains 3 multisubunit complexes succinate dehydrogenase (complex II, CII), ubiquinol-cytochrome c oxidoreductase (cytochrome b-c1 complex, complex III, CIII) and cytochrome c oxidase (complex IV, CIV), that cooperate to transfer electrons derived from NADH and succinate to molecular oxygen, creating an electrochemical gradient over the inner membrane that drives transmembrane transport and the ATP synthase. Cytochrome c oxidase is the component of the respiratory chain that catalyzes the reduction of oxygen to water. Electrons originating from reduced cytochrome c in the intermembrane space (IMS) are transferred via the dinuclear copper A center (CU(A)) of subunit 2 and heme A of subunit 1 to the active site in subunit 1, a binuclear center (BNC) formed by heme A3 and copper B (CU(B)). The BNC reduces molecular oxygen to 2 water molecules using 4 electrons from cytochrome c in the IMS and 4 protons from the mitochondrial matrix. In Lycaon pictus (African wild dog), this protein is Cytochrome c oxidase subunit 2 (MT-CO2).